Reading from the N-terminus, the 113-residue chain is uncharacterized protein (113 aa).

This is an uncharacterized protein from Haemophilus influenzae (strain ATCC 51907 / DSM 11121 / KW20 / Rd).